The primary structure comprises 185 residues: Peptidyl-tRNA hydrolase (185 aa).

TRNA is bound at residue F14. The active-site Proton acceptor is the H19. Residues Y64, N66, and N112 each coordinate tRNA.

Belongs to the PTH family. Monomer.

Its subcellular location is the cytoplasm. It catalyses the reaction an N-acyl-L-alpha-aminoacyl-tRNA + H2O = an N-acyl-L-amino acid + a tRNA + H(+). Its function is as follows. Hydrolyzes ribosome-free peptidyl-tRNAs (with 1 or more amino acids incorporated), which drop off the ribosome during protein synthesis, or as a result of ribosome stalling. Functionally, catalyzes the release of premature peptidyl moieties from peptidyl-tRNA molecules trapped in stalled 50S ribosomal subunits, and thus maintains levels of free tRNAs and 50S ribosomes. The chain is Peptidyl-tRNA hydrolase from Exiguobacterium sp. (strain ATCC BAA-1283 / AT1b).